The sequence spans 323 residues: Acetyl-coenzyme A carboxylase carboxyl transferase subunit alpha 1 (323 aa).

The CoA carboxyltransferase C-terminal domain occupies 39 to 293; it reads RLSKKSQQLT…RRALGDSLRQ (255 aa).

Belongs to the AccA family. Acetyl-CoA carboxylase is a heterohexamer composed of biotin carboxyl carrier protein (AccB), biotin carboxylase (AccC) and two subunits each of ACCase subunit alpha (AccA) and ACCase subunit beta (AccD).

Its subcellular location is the cytoplasm. The enzyme catalyses N(6)-carboxybiotinyl-L-lysyl-[protein] + acetyl-CoA = N(6)-biotinyl-L-lysyl-[protein] + malonyl-CoA. It participates in lipid metabolism; malonyl-CoA biosynthesis; malonyl-CoA from acetyl-CoA: step 1/1. Functionally, component of the acetyl coenzyme A carboxylase (ACC) complex. First, biotin carboxylase catalyzes the carboxylation of biotin on its carrier protein (BCCP) and then the CO(2) group is transferred by the carboxyltransferase to acetyl-CoA to form malonyl-CoA. Does not confer resistance to the endogenous polyketide antibiotic thailandamide, does not confer resistance to thailandamide when expressed in S.typhimurium. The polypeptide is Acetyl-coenzyme A carboxylase carboxyl transferase subunit alpha 1 (Burkholderia thailandensis (strain ATCC 700388 / DSM 13276 / CCUG 48851 / CIP 106301 / E264)).